Reading from the N-terminus, the 118-residue chain is UPF0145 protein PTO0347 (118 aa).

The protein belongs to the UPF0145 family.

The protein is UPF0145 protein PTO0347 of Picrophilus torridus (strain ATCC 700027 / DSM 9790 / JCM 10055 / NBRC 100828 / KAW 2/3).